Here is a 268-residue protein sequence, read N- to C-terminus: 4-hydroxy-tetrahydrodipicolinate reductase (268 aa).

NAD(+) contacts are provided by residues 9–14 (GAAGRM), 99–101 (GTT), and 123–126 (ASNF). Histidine 156 serves as the catalytic Proton donor/acceptor. Histidine 157 provides a ligand contact to (S)-2,3,4,5-tetrahydrodipicolinate. The active-site Proton donor is the lysine 160. A (S)-2,3,4,5-tetrahydrodipicolinate-binding site is contributed by 166 to 167 (GT).

Belongs to the DapB family.

It localises to the cytoplasm. The catalysed reaction is (S)-2,3,4,5-tetrahydrodipicolinate + NAD(+) + H2O = (2S,4S)-4-hydroxy-2,3,4,5-tetrahydrodipicolinate + NADH + H(+). It catalyses the reaction (S)-2,3,4,5-tetrahydrodipicolinate + NADP(+) + H2O = (2S,4S)-4-hydroxy-2,3,4,5-tetrahydrodipicolinate + NADPH + H(+). The protein operates within amino-acid biosynthesis; L-lysine biosynthesis via DAP pathway; (S)-tetrahydrodipicolinate from L-aspartate: step 4/4. Functionally, catalyzes the conversion of 4-hydroxy-tetrahydrodipicolinate (HTPA) to tetrahydrodipicolinate. In Saccharophagus degradans (strain 2-40 / ATCC 43961 / DSM 17024), this protein is 4-hydroxy-tetrahydrodipicolinate reductase.